A 1257-amino-acid chain; its full sequence is Elongation factor 2 (1257 aa).

The DOD-type homing endonuclease domain occupies L273–V402. The tr-type G domain occupies V541 to V782. GTP-binding positions include D616 to H620 and N670 to D673. H1120 carries the diphthamide modification. Positions E1237–D1250 are enriched in basic and acidic residues. Positions E1237–G1257 are disordered.

The protein belongs to the TRAFAC class translation factor GTPase superfamily. Classic translation factor GTPase family. EF-G/EF-2 subfamily. This protein undergoes a protein self splicing that involves a post-translational excision of the intervening region (intein) followed by peptide ligation.

It localises to the cytoplasm. Its function is as follows. Catalyzes the GTP-dependent ribosomal translocation step during translation elongation. During this step, the ribosome changes from the pre-translocational (PRE) to the post-translocational (POST) state as the newly formed A-site-bound peptidyl-tRNA and P-site-bound deacylated tRNA move to the P and E sites, respectively. Catalyzes the coordinated movement of the two tRNA molecules, the mRNA and conformational changes in the ribosome. The polypeptide is Elongation factor 2 (Methanopyrus kandleri (strain AV19 / DSM 6324 / JCM 9639 / NBRC 100938)).